The following is a 356-amino-acid chain: Competence protein ComGA (356 aa).

G144–T151 is an ATP binding site.

This sequence belongs to the GSP E family.

The protein localises to the cell membrane. Functionally, required for uptake of DNA by competent cells. The polypeptide is Competence protein ComGA (comGA) (Bacillus subtilis (strain 168)).